A 336-amino-acid chain; its full sequence is Glycerol-3-phosphate dehydrogenase [NAD(P)+] (336 aa).

Positions 16, 17, 37, and 111 each coordinate NADPH. Sn-glycerol 3-phosphate contacts are provided by K111, G140, and T142. A144 lines the NADPH pocket. K196, D249, S259, R260, and N261 together coordinate sn-glycerol 3-phosphate. K196 serves as the catalytic Proton acceptor. An NADPH-binding site is contributed by R260. The NADPH site is built by V284 and E286.

Belongs to the NAD-dependent glycerol-3-phosphate dehydrogenase family.

The protein resides in the cytoplasm. The catalysed reaction is sn-glycerol 3-phosphate + NAD(+) = dihydroxyacetone phosphate + NADH + H(+). It catalyses the reaction sn-glycerol 3-phosphate + NADP(+) = dihydroxyacetone phosphate + NADPH + H(+). It participates in membrane lipid metabolism; glycerophospholipid metabolism. Functionally, catalyzes the reduction of the glycolytic intermediate dihydroxyacetone phosphate (DHAP) to sn-glycerol 3-phosphate (G3P), the key precursor for phospholipid synthesis. The polypeptide is Glycerol-3-phosphate dehydrogenase [NAD(P)+] (Glaesserella parasuis serovar 5 (strain SH0165) (Haemophilus parasuis)).